Here is an 876-residue protein sequence, read N- to C-terminus: Probable DNA-directed RNA polymerase catalytic subunit (876 aa).

It belongs to the RNA polymerase beta chain family. In terms of assembly, interacts with LEF-4, LEF-9, and p47.

It carries out the reaction RNA(n) + a ribonucleoside 5'-triphosphate = RNA(n+1) + diphosphate. Its function is as follows. Component of the viral DNA-dependent RNA polymerase which is composed of four equimolar subunits of LEF-4, LEF-8, LEF-9, and p47. Plays an essential role in late and very late gene expression. The chain is Probable DNA-directed RNA polymerase catalytic subunit (LEF-8) from Autographa californica nuclear polyhedrosis virus (AcMNPV).